Consider the following 459-residue polypeptide: Putrescine aminotransferase (459 aa).

Residues 150 to 151 (GT) and Q274 each bind pyridoxal 5'-phosphate. K300 is modified (N6-(pyridoxal phosphate)lysine). Pyridoxal 5'-phosphate is bound at residue T332.

Belongs to the class-III pyridoxal-phosphate-dependent aminotransferase family. Putrescine aminotransferase subfamily. Pyridoxal 5'-phosphate serves as cofactor.

It catalyses the reaction an alkane-alpha,omega-diamine + 2-oxoglutarate = an omega-aminoaldehyde + L-glutamate. The enzyme catalyses putrescine + 2-oxoglutarate = 1-pyrroline + L-glutamate + H2O. It carries out the reaction cadaverine + 2-oxoglutarate = 5-aminopentanal + L-glutamate. It functions in the pathway amine and polyamine degradation; putrescine degradation; 4-aminobutanal from putrescine (transaminase route): step 1/1. Functionally, catalyzes the aminotransferase reaction from putrescine to 2-oxoglutarate, leading to glutamate and 4-aminobutanal, which spontaneously cyclizes to form 1-pyrroline. This is the first step in one of two pathways for putrescine degradation, where putrescine is converted into 4-aminobutanoate (gamma-aminobutyrate or GABA) via 4-aminobutanal. Also functions as a cadaverine transaminase in a a L-lysine degradation pathway to succinate that proceeds via cadaverine, glutarate and L-2-hydroxyglutarate. This Escherichia coli O81 (strain ED1a) protein is Putrescine aminotransferase.